A 356-amino-acid polypeptide reads, in one-letter code: Guanine nucleotide-binding protein alpha-2 subunit (356 aa).

Gly2 carries N-myristoyl glycine lipidation. Residue Cys4 is the site of S-palmitoyl cysteine attachment. The 322-residue stretch at 35 to 356 (REVKLLLLGA…LTNNLRDIVL (322 aa)) folds into the G-alpha domain. The G1 motif stretch occupies residues 38–51 (KLLLLGAGESGKST). GTP contacts are provided by Glu46, Ser47, Gly48, Lys49, Ser50, Thr51, Asp153, Leu178, Thr184, Gly206, Asn272, Lys273, Asp275, and Ala329. Position 50 (Ser50) interacts with Mg(2+). The interval 176–184 (DILRCRNKT) is G2 motif. Thr184 contributes to the Mg(2+) binding site. Positions 199–208 (YRIFDVGGQR) are G3 motif. The interval 268–275 (ILFLNKVD) is G4 motif. Residues 327 to 332 (TNATDV) are G5 motif.

This sequence belongs to the G-alpha family. G proteins are composed of 3 units; alpha, beta and gamma. The alpha chain contains the guanine nucleotide binding site. It depends on Mg(2+) as a cofactor.

Its function is as follows. Guanine nucleotide-binding proteins (G proteins) are involved as modulators or transducers in various transmembrane signaling systems. The polypeptide is Guanine nucleotide-binding protein alpha-2 subunit (GPA2) (Mycosarcoma maydis (Corn smut fungus)).